We begin with the raw amino-acid sequence, 91 residues long: UPF0358 protein SERP0701 (91 aa).

This sequence belongs to the UPF0358 family.

The sequence is that of UPF0358 protein SERP0701 from Staphylococcus epidermidis (strain ATCC 35984 / DSM 28319 / BCRC 17069 / CCUG 31568 / BM 3577 / RP62A).